The chain runs to 520 residues: GMP synthase [glutamine-hydrolyzing] (520 aa).

Residues 12–205 (KIIVLDYGSQ…AISICGARGD (194 aa)) enclose the Glutamine amidotransferase type-1 domain. The Nucleophile role is filled by cysteine 89. Active-site residues include histidine 179 and glutamate 181. Residues 206 to 395 (WSMDNFIDME…LGMPEEIVWR (190 aa)) enclose the GMPS ATP-PPase domain. Residue 233–239 (SGGVDSS) coordinates ATP.

Homodimer.

The catalysed reaction is XMP + L-glutamine + ATP + H2O = GMP + L-glutamate + AMP + diphosphate + 2 H(+). The protein operates within purine metabolism; GMP biosynthesis; GMP from XMP (L-Gln route): step 1/1. Its function is as follows. Catalyzes the synthesis of GMP from XMP. The protein is GMP synthase [glutamine-hydrolyzing] of Streptococcus pyogenes serotype M2 (strain MGAS10270).